Here is a 133-residue protein sequence, read N- to C-terminus: Small ribosomal subunit protein eS24z (133 aa).

The disordered stretch occupies residues 104–133; the sequence is KSRKQIKERKNRAKKIRGVKKTKAGDAKKK. The span at 109-125 shows a compositional bias: basic residues; sequence IKERKNRAKKIRGVKKT.

It belongs to the eukaryotic ribosomal protein eS24 family.

This chain is Small ribosomal subunit protein eS24z (RPS24A), found in Arabidopsis thaliana (Mouse-ear cress).